The sequence spans 238 residues: Flagellar L-ring protein (238 aa).

The first 17 residues, 1–17, serve as a signal peptide directing secretion; that stretch reads MIRKTLAASCAVLLMAG. Residue cysteine 18 is the site of N-palmitoyl cysteine attachment. Cysteine 18 is lipidated: S-diacylglycerol cysteine.

It belongs to the FlgH family. As to quaternary structure, the basal body constitutes a major portion of the flagellar organelle and consists of four rings (L,P,S, and M) mounted on a central rod.

Its subcellular location is the cell outer membrane. The protein resides in the bacterial flagellum basal body. Assembles around the rod to form the L-ring and probably protects the motor/basal body from shearing forces during rotation. The chain is Flagellar L-ring protein from Nitratidesulfovibrio vulgaris (strain ATCC 29579 / DSM 644 / CCUG 34227 / NCIMB 8303 / VKM B-1760 / Hildenborough) (Desulfovibrio vulgaris).